Here is an 868-residue protein sequence, read N- to C-terminus: Leucine--tRNA ligase (868 aa).

A 'HIGH' region motif is present at residues 42-52 (PYPSGKLHMGH). The 'KMSKS' region signature appears at 627–631 (KMSKS). Lys630 serves as a coordination point for ATP.

It belongs to the class-I aminoacyl-tRNA synthetase family.

It is found in the cytoplasm. It catalyses the reaction tRNA(Leu) + L-leucine + ATP = L-leucyl-tRNA(Leu) + AMP + diphosphate. This chain is Leucine--tRNA ligase, found in Pseudomonas syringae pv. syringae (strain B728a).